A 607-amino-acid polypeptide reads, in one-letter code: Coronin-like protein cor-1 (607 aa).

WD repeat units follow at residues 77-117 (AHKA…LNRN), 127-167 (GHQK…ALLE), and 170-209 (GHPDQIWSINFNFDGSQFVTTCKDKKIRILDSHTGEVVHE). Positions 415-564 (PTAAESVPTQ…VSAASDVGHV (150 aa)) are disordered. Residues 424–436 (QSYSERPPSSQQP) are compositionally biased toward low complexity. Residues 437 to 447 (SPRPSASPRPR) are compositionally biased toward pro residues. Basic and acidic residues-rich tracts occupy residues 473 to 489 (SRTEIPPKEESKVDPMK) and 517 to 533 (AAAELERIKRDQSRTAD). Positions 544 to 559 (SSRASASPRGSVSAAS) are enriched in low complexity. A coiled-coil region spans residues 563–602 (HVPQNMDELLEDLMKMKAVLRQHERRIRMLEEEIADRNMS).

The protein belongs to the WD repeat coronin family.

The protein localises to the cytoplasm. The protein resides in the cytoskeleton. Required to direct the migration of Q neuroblasts along the anterior axis of the body during larval development. This is dependent on its asymmetric expression in Q neuroblasts. The chain is Coronin-like protein cor-1 (cor-1) from Caenorhabditis elegans.